The chain runs to 525 residues: Sensory neuron membrane protein 1 (525 aa).

At 1–11 the chain is on the cytoplasmic side; the sequence is MLLPKELKYAA. A helical transmembrane segment spans residues 12 to 32; that stretch reads IAGGVAVFGLIFGWVLFPVIL. At 33 to 456 the chain is on the extracellular side; the sequence is KGQLKKEMAL…LKHQLFIPKR (424 aa). Asparagine 67, asparagine 229, and asparagine 324 each carry an N-linked (GlcNAc...) asparagine glycan. 3 disulfide bridges follow: cysteine 268–cysteine 333, cysteine 297–cysteine 352, and cysteine 335–cysteine 341. Asparagine 440 is a glycosylation site (N-linked (GlcNAc...) asparagine). Residues 457–477 form a helical membrane-spanning segment; sequence VVGVLRWWMVSFGSLGADIGI. Residues 478-525 lie on the Cytoplasmic side of the membrane; the sequence is VYHFRDHIMRLAVSGDTKVSKVTPEEDPEQKDISVIGPPAQEPAKINI. Residues 497–525 form a disordered region; that stretch reads SKVTPEEDPEQKDISVIGPPAQEPAKINI.

Belongs to the CD36 family.

Its subcellular location is the cell membrane. Functionally, plays an olfactory role that is not restricted to pheromone sensitivity. In Mamestra brassicae (Cabbage moth), this protein is Sensory neuron membrane protein 1.